We begin with the raw amino-acid sequence, 597 residues long: MPDLSLFGHDPFWLVVAKSVFLFVYIILIPLVAVLAERKVVARMQMRVGPNRVGPFGSLQSIADGVKMAFKEDLVPAIVDKPIYLLAPVVSVIPAFMAFAVIPLGGEVSVAGNTTALQLTDMPVGVLYILAITSIGVYGIVLAGWASGSTYPLLGGLRSTAQVISYEIAMALCFAAVFLHAGTMATSGIVGAQHPTWFVFLLLPSFLIYCVSMVGETNRAPFDLPEAEGELVGGFHTEYSSLKFAMFMLAEYVNMGTVSALATTLFLGGWSAPWPFNLIPGADAGWWGLLWFTAKVWTFMFVFVWLRGTLPRLRYDQFMRLGWQLLIPVSLLWVMLVATARLLRADGHAWATGAQVVVGVALTAAMIGLFLRAGRRPAAPPEPEPEPSGEAVFLGFPTPPVPADAHRVDNPKGGLLEPLAGFAVTAATMFKKPNTEFYPEQKVPTAPRYHGRHQLNRHPDGLEKCIGCELCAWACPADAIYVEGADNTEDERYSPGERYGRVYQINYLRCIGCGLCIEACPTRALTMTNDYELTDDNRADLIYEKDRLLAPLAPGMVAPPPAMAPGTTEADYYLGAVTGGAPAAEQPAPAGAKGGAR.

An NADH-quinone oxidoreductase subunit H region spans residues 1–405; that stretch reads MPDLSLFGHD…FPTPPVPADA (405 aa). The next 9 helical transmembrane spans lie at 12-32, 82-102, 124-144, 170-190, 195-215, 260-280, 286-306, 318-338, and 351-371; these read FWLV…IPLV, PIYL…FAVI, VGVL…VLAG, MALC…SGIV, PTWF…SMVG, ALAT…NLIP, WWGL…FVWL, FMRL…MLVA, and ATGA…GLFL. The NADH-quinone oxidoreductase subunit I stretch occupies residues 406 to 597; it reads HRVDNPKGGL…APAGAKGGAR (192 aa). 2 consecutive 4Fe-4S ferredoxin-type domains span residues 455–485 and 501–530; these read LNRH…VEGA and RVYQ…MTND. 8 residues coordinate [4Fe-4S] cluster: Cys-465, Cys-468, Cys-471, Cys-475, Cys-510, Cys-513, Cys-516, and Cys-520.

It in the N-terminal section; belongs to the complex I subunit 1 family. This sequence in the C-terminal section; belongs to the complex I 23 kDa subunit family. As to quaternary structure, NDH-1 is composed of 13 different subunits. Subunits NuoA, H/I, J, K, L, M, N constitute the membrane sector of the complex. It depends on [4Fe-4S] cluster as a cofactor.

It is found in the cell membrane. The enzyme catalyses a quinone + NADH + 5 H(+)(in) = a quinol + NAD(+) + 4 H(+)(out). NDH-1 shuttles electrons from NADH, via FMN and iron-sulfur (Fe-S) centers, to quinones in the respiratory chain. The immediate electron acceptor for the enzyme in this species is believed to be ubiquinone. Couples the redox reaction to proton translocation (for every two electrons transferred, four hydrogen ions are translocated across the cytoplasmic membrane), and thus conserves the redox energy in a proton gradient. This subunit may bind ubiquinone. In Nocardia farcinica (strain IFM 10152), this protein is NADH-quinone oxidoreductase subunits H/I (nuoH/I).